A 253-amino-acid polypeptide reads, in one-letter code: MAHYKTEQDDWLIIYLKYLLFVFNFFFWVGGAAVLAVGIWTLVEKSGYLSVLASSTFAASAYILIFAGVLVMVTGFLGFGAILWERKGCLSTYFCLLLVIFLVELVAGVLAHVYYQRLSDELKQHLNRTLAENYGQPGATQITASVDRLQQDFKCCGSNSSADWQHSTYILLREAEGRQVPDSCCKTVVVRCGQRAHPSNIYKVEGGCLTKLEQFLADHLLLMGAVGIGVACLQICGMVLTCCLHQRLQRHFY.

3 helical membrane-spanning segments follow: residues 19 to 39, 63 to 83, and 93 to 113; these read LLFV…AVGI, ILIF…GAIL, and YFCL…LAHV. Asn127 carries N-linked (GlcNAc...) asparagine glycosylation. The helical transmembrane segment at 220 to 240 threads the bilayer; the sequence is LLLMGAVGIGVACLQICGMVL.

The protein belongs to the tetraspanin (TM4SF) family.

The protein resides in the membrane. The chain is Tetraspanin-11 (TSPAN11) from Homo sapiens (Human).